A 689-amino-acid chain; its full sequence is Small ribosomal subunit protein mS39 (689 aa).

The transit peptide at 1 to 37 (MAGVSAVRWLGLRSRLGQPLTGRRAGLCKQARSCRFY) directs the protein to the mitochondrion. Position 126 is an N6-acetyllysine (lysine 126). 10 PPR repeats span residues 149–183 (IKDISEAALKERIELRKVKASVDMFDQLLQAGTTV), 184–219 (SLETTNSLLDLLCYFGDQEPSTDYHFQQTEQSEALE), 255–289 (NAHSYCTMIRGMVKHRAYEQALNLYTELLNNRLHA), 290–330 (DVYT…KVKP), 331–367 (NLQTFNTILKCLRRFHVFARSPALRILREMKAIGIEP), 368–404 (SLATYHHIIHVFDQPGDPLKRSSFIIYDIMNELMGKR), 412–446 (DDKFFQSAMSICSSLRDLELAYQVHGLLNTGDNWK), 454–488 (RNFYYSKFFDLICLMEQIDVTLKWYEDLIPSVYFP), 489–523 (HSQTLIHLLQALDVANRLEMIPKIWKDSKEYGHTF), and 572–606 (PATSLYCIAILFLRAGRTQEAWNMLELFRKHNKIP). The tract at residues 665–689 (NLTALTSDSDTDSSSDSDSDTSEGK) is disordered. Acidic residues predominate over residues 673–689 (SDTDSSSDSDSDTSEGK).

The protein belongs to the mitochondrion-specific ribosomal protein mS39 family. Component of the mitochondrial ribosome small subunit (28S) which comprises a 12S rRNA and about 30 distinct proteins. Associated with the 12S mitochondrial rRNA (12S mt-rRNA).

It localises to the mitochondrion. Mitochondrial RNA-binding protein that has a role in mitochondrial translation. The polypeptide is Small ribosomal subunit protein mS39 (PTCD3) (Pongo abelii (Sumatran orangutan)).